We begin with the raw amino-acid sequence, 523 residues long: UvrABC system protein C (523 aa).

One can recognise a GIY-YIG domain in the interval 15-93 (HLPGCYLFKD…IKKHWPRYNI (79 aa)). Residues 197-232 (RELIESMETEMKEMAAKQMFEQAMELRDEIAALEYL) form the UVR domain.

Belongs to the UvrC family. As to quaternary structure, interacts with UvrB in an incision complex.

It localises to the cytoplasm. Its function is as follows. The UvrABC repair system catalyzes the recognition and processing of DNA lesions. UvrC both incises the 5' and 3' sides of the lesion. The N-terminal half is responsible for the 3' incision and the C-terminal half is responsible for the 5' incision. In Methanosarcina mazei (strain ATCC BAA-159 / DSM 3647 / Goe1 / Go1 / JCM 11833 / OCM 88) (Methanosarcina frisia), this protein is UvrABC system protein C.